The following is a 362-amino-acid chain: Dihydroorotate dehydrogenase (quinone) (362 aa).

Residues 62-66 (AGYDK) and Thr-86 each bind FMN. Lys-66 is a binding site for substrate. A substrate-binding site is contributed by 111-115 (NRLGF). Positions 139 and 170 each coordinate FMN. Position 170 (Asn-170) interacts with substrate. The active-site Nucleophile is Ser-173. Asn-175 is a substrate binding site. 2 residues coordinate FMN: Lys-215 and Ser-243. 244–245 (NT) contacts substrate. FMN-binding positions include Gly-266, Gly-295, and 316 to 317 (YS).

Belongs to the dihydroorotate dehydrogenase family. Type 2 subfamily. In terms of assembly, monomer. The cofactor is FMN.

Its subcellular location is the cell membrane. It catalyses the reaction (S)-dihydroorotate + a quinone = orotate + a quinol. The protein operates within pyrimidine metabolism; UMP biosynthesis via de novo pathway; orotate from (S)-dihydroorotate (quinone route): step 1/1. Its function is as follows. Catalyzes the conversion of dihydroorotate to orotate with quinone as electron acceptor. In Rhizobium etli (strain ATCC 51251 / DSM 11541 / JCM 21823 / NBRC 15573 / CFN 42), this protein is Dihydroorotate dehydrogenase (quinone).